A 177-amino-acid polypeptide reads, in one-letter code: Probable chemoreceptor glutamine deamidase CheD (177 aa).

The protein belongs to the CheD family.

The enzyme catalyses L-glutaminyl-[protein] + H2O = L-glutamyl-[protein] + NH4(+). Functionally, probably deamidates glutamine residues to glutamate on methyl-accepting chemotaxis receptors (MCPs), playing an important role in chemotaxis. This is Probable chemoreceptor glutamine deamidase CheD from Pseudomonas syringae pv. syringae (strain B728a).